The primary structure comprises 290 residues: UPF0761 membrane protein YihY (290 aa).

A run of 6 helical transmembrane segments spans residues 44–64 (LLSLVPLVAVVFALFAAFPMF), 104–124 (VGACGLIVTALLLMYSIDSAL), 140–160 (FAVYWMILTLGPLLAGASLAI), 183–203 (IFPLLLSWISFWLLYSIVPTI), 210–230 (AIVGAFVAALLFEAGKKGFAL), and 244–264 (VLAVIPILFVWVYWTWCIVLL).

The protein belongs to the UPF0761 family.

It is found in the cell inner membrane. This chain is UPF0761 membrane protein YihY, found in Escherichia fergusonii (strain ATCC 35469 / DSM 13698 / CCUG 18766 / IAM 14443 / JCM 21226 / LMG 7866 / NBRC 102419 / NCTC 12128 / CDC 0568-73).